The primary structure comprises 88 residues: Phosphocarrier protein HPr (88 aa).

One can recognise an HPr domain in the interval Met1–Glu88. Catalysis depends on His15, which acts as the Pros-phosphohistidine intermediate. Ser46 is modified (phosphoserine; by HPrK/P).

Belongs to the HPr family.

The protein resides in the cytoplasm. With respect to regulation, phosphorylation on Ser-46 inhibits the phosphoryl transfer from enzyme I to HPr. Functionally, general (non sugar-specific) component of the phosphoenolpyruvate-dependent sugar phosphotransferase system (sugar PTS). This major carbohydrate active-transport system catalyzes the phosphorylation of incoming sugar substrates concomitantly with their translocation across the cell membrane. The phosphoryl group from phosphoenolpyruvate (PEP) is transferred to the phosphoryl carrier protein HPr by enzyme I. Phospho-HPr then transfers it to the PTS EIIA domain. Its function is as follows. P-Ser-HPr interacts with the catabolite control protein A (CcpA), forming a complex that binds to DNA at the catabolite response elements cre, operator sites preceding a large number of catabolite-regulated genes. Thus, P-Ser-HPr is a corepressor in carbon catabolite repression (CCR), a mechanism that allows bacteria to coordinate and optimize the utilization of available carbon sources. P-Ser-HPr also plays a role in inducer exclusion, in which it probably interacts with several non-PTS permeases and inhibits their transport activity. The polypeptide is Phosphocarrier protein HPr (ptsH) (Lactococcus lactis subsp. lactis (strain IL1403) (Streptococcus lactis)).